Here is a 261-residue protein sequence, read N- to C-terminus: Orotidine 5'-phosphate decarboxylase (261 aa).

Substrate is bound by residues aspartate 34, 56 to 58 (KTH), 88 to 97 (DRKFADIGNT), tyrosine 214, and arginine 232. Lysine 90 functions as the Proton donor in the catalytic mechanism.

It belongs to the OMP decarboxylase family.

The enzyme catalyses orotidine 5'-phosphate + H(+) = UMP + CO2. Its pathway is pyrimidine metabolism; UMP biosynthesis via de novo pathway; UMP from orotate: step 2/2. The chain is Orotidine 5'-phosphate decarboxylase (URA3) from Kodamaea ohmeri (Yeast).